The chain runs to 556 residues: Urocanate hydratase (556 aa).

Residues 52–53 (GG), Gln130, 176–178 (GMG), Glu196, Arg201, 242–243 (NA), 263–267 (QTSAH), 273–274 (YL), and Tyr322 each bind NAD(+). Residue Cys410 is part of the active site. Gly492 lines the NAD(+) pocket.

This sequence belongs to the urocanase family. Requires NAD(+) as cofactor.

It is found in the cytoplasm. The catalysed reaction is 4-imidazolone-5-propanoate = trans-urocanate + H2O. Its pathway is amino-acid degradation; L-histidine degradation into L-glutamate; N-formimidoyl-L-glutamate from L-histidine: step 2/3. Functionally, catalyzes the conversion of urocanate to 4-imidazolone-5-propionate. This chain is Urocanate hydratase, found in Bradyrhizobium sp. (strain ORS 278).